Reading from the N-terminus, the 331-residue chain is 4-hydroxythreonine-4-phosphate dehydrogenase (331 aa).

2 residues coordinate substrate: histidine 137 and threonine 138. Residues histidine 167, histidine 212, and histidine 267 each contribute to the a divalent metal cation site. Substrate is bound by residues lysine 275, asparagine 284, and arginine 293.

Belongs to the PdxA family. In terms of assembly, homodimer. The cofactor is Zn(2+). Mg(2+) serves as cofactor. It depends on Co(2+) as a cofactor.

The protein resides in the cytoplasm. It catalyses the reaction 4-(phosphooxy)-L-threonine + NAD(+) = 3-amino-2-oxopropyl phosphate + CO2 + NADH. Its pathway is cofactor biosynthesis; pyridoxine 5'-phosphate biosynthesis; pyridoxine 5'-phosphate from D-erythrose 4-phosphate: step 4/5. Catalyzes the NAD(P)-dependent oxidation of 4-(phosphooxy)-L-threonine (HTP) into 2-amino-3-oxo-4-(phosphooxy)butyric acid which spontaneously decarboxylates to form 3-amino-2-oxopropyl phosphate (AHAP). The polypeptide is 4-hydroxythreonine-4-phosphate dehydrogenase (Yersinia enterocolitica serotype O:8 / biotype 1B (strain NCTC 13174 / 8081)).